Here is a 68-residue protein sequence, read N- to C-terminus: Putative membrane protein insertion efficiency factor (68 aa).

It belongs to the UPF0161 family.

The protein resides in the cell inner membrane. Could be involved in insertion of integral membrane proteins into the membrane. This is Putative membrane protein insertion efficiency factor from Aquifex aeolicus (strain VF5).